The following is a 196-amino-acid chain: Dephospho-CoA kinase (196 aa).

The DPCK domain occupies 5–196; it reads IIGLTGGIAT…QVDIALNFEL (192 aa). 13 to 18 provides a ligand contact to ATP; that stretch reads ATGKTT.

The protein belongs to the CoaE family.

The protein localises to the cytoplasm. The catalysed reaction is 3'-dephospho-CoA + ATP = ADP + CoA + H(+). The protein operates within cofactor biosynthesis; coenzyme A biosynthesis; CoA from (R)-pantothenate: step 5/5. Its function is as follows. Catalyzes the phosphorylation of the 3'-hydroxyl group of dephosphocoenzyme A to form coenzyme A. The sequence is that of Dephospho-CoA kinase from Nostoc sp. (strain PCC 7120 / SAG 25.82 / UTEX 2576).